A 201-amino-acid chain; its full sequence is Small ribosomal subunit protein uS4 (201 aa).

Positions 92–155 (ARLDNVVFRL…KSLEVIANSL (64 aa)) constitute an S4 RNA-binding domain.

The protein belongs to the universal ribosomal protein uS4 family. As to quaternary structure, part of the 30S ribosomal subunit. Contacts protein S5. The interaction surface between S4 and S5 is involved in control of translational fidelity.

In terms of biological role, one of the primary rRNA binding proteins, it binds directly to 16S rRNA where it nucleates assembly of the body of the 30S subunit. Its function is as follows. With S5 and S12 plays an important role in translational accuracy. This chain is Small ribosomal subunit protein uS4, found in Phocaeicola vulgatus (strain ATCC 8482 / DSM 1447 / JCM 5826 / CCUG 4940 / NBRC 14291 / NCTC 11154) (Bacteroides vulgatus).